We begin with the raw amino-acid sequence, 440 residues long: Xaa-Pro dipeptidase (440 aa).

Residues D244, D255, H336, E381, and E420 each coordinate Mn(2+).

It belongs to the peptidase M24B family. Mn(2+) serves as cofactor. Post-translationally, the N-terminus is blocked.

The catalysed reaction is Xaa-L-Pro dipeptide + H2O = an L-alpha-amino acid + L-proline. It carries out the reaction diisopropyl fluorophosphate + H2O = diisopropyl phosphate + fluoride + 2 H(+). Functionally, splits dipeptides with a prolyl or hydroxyprolyl residue in the C-terminal position and a nonpolar amino acid at the N-terminal position. Also catalyzes the hydrolysis of toxic organophosphorus cholinesterase-inhibiting compounds including nerve gases such as diisopropylfluorophosphate (DFP), O-isopropyl methylphosphonofluoridate (sarin), O-pinacolyl methylphosphonofluoridate (soman), and O-cyclohexyl methylphosphonofluoridate. This is Xaa-Pro dipeptidase (pepQ) from Pseudoalteromonas haloplanktis (Alteromonas haloplanktis).